The primary structure comprises 701 residues: MEIPLSRYQSIRLDEIRDSSSNPKVLTFPRKFSLRGRRWKNPFGRLSCSSVVQGLKPKPKLKPEPIRIEVKESKDQILDDTQISKSGVTICSQIEKLVLCNRFREAFELFEILEIRCSFKVGVSTYDALVEACIRLKSIRCVKRVYGFMMSNGFEPEQYMMNRILLMHVKCGMIIDARRLFDEIPERNLYSYYSIISGFVNFGNYVEAFELFKMMWEELSDCETHTFAVMLRASAGLGSIYVGKQLHVCALKLGVVDNTFVSCGLIDMYSKCGDIEDARCAFECMPEKTTVAWNNVIAGYALHGYSEEALCLLYDMRDSGVSIDQFTLSIMIRISTKLAKLELTKQAHASLIRNGFESEIVANTALVDFYSKWGRVDTARYVFDKLPRKNIISWNALMGGYANHGRGTDAVKLFEKMIAANVAPNHVTFLAVLSACAYSGLSEQGWEIFLSMSEVHGIKPRAMHYACMIELLGRDGLLDEAIAFIRRAPLKTTVNMWAALLNACRMQENLELGRVVAEKLYGMGPEKLGNYVVMYNMYNSMGKTAEAAGVLETLESKGLSMMPACTWVEVGDQTHSFLSGDRFDSYNETVKRQIYQKVDELMEEISEYGYSEEEQHLLPDVDEKEEERVGRYHSEKLAIAYGLVNTPEWNPLQITQNHRICKNCHKVVEFISLVTGREMVVRDASRFHHFKEGKCSCGGYW.

Residues 1–47 constitute a chloroplast transit peptide; the sequence is MEIPLSRYQSIRLDEIRDSSSNPKVLTFPRKFSLRGRRWKNPFGRLS. PPR repeat units follow at residues 86 to 116, 122 to 156, 157 to 187, 188 to 218, 223 to 257, 258 to 288, 289 to 323, 324 to 358, 359 to 389, 390 to 424, 425 to 460, and 461 to 491; these read SGVT…LEIR, GVST…GFEP, EQYM…IPER, NLYS…MWEE, ETHT…GVVD, NTFV…MPEK, TTVA…GVSI, DQFT…GFES, EIVA…LPRK, NIIS…NVAP, NHVT…GIKP, and RAMH…APLK. The type E motif stretch occupies residues 496-571; the sequence is MWAALLNACR…MPACTWVEVG (76 aa). Residues 572 to 606 are type E(+) motif; degenerate; that stretch reads DQTHSFLSGDRFDSYNETVKRQIYQKVDELMEEIS. The interval 607–701 is type DYW motif; sequence EYGYSEEEQH…EGKCSCGGYW (95 aa).

This sequence belongs to the PPR family. PCMP-H subfamily.

Its subcellular location is the plastid. The protein localises to the chloroplast. In Arabidopsis thaliana (Mouse-ear cress), this protein is Pentatricopeptide repeat-containing protein At5g50390, chloroplastic (PCMP-H58).